Consider the following 339-residue polypeptide: Serine/threonine-protein kinase pdik1l-B (339 aa).

A Protein kinase domain is found at 8 to 332 (YDLIREVGRG…LELKLIQIAF (325 aa)). ATP contacts are provided by residues 14-22 (VGRGSYGLV) and K37. The Proton acceptor role is filled by D164.

Belongs to the protein kinase superfamily. Ser/Thr protein kinase family.

It is found in the nucleus. The enzyme catalyses L-seryl-[protein] + ATP = O-phospho-L-seryl-[protein] + ADP + H(+). The catalysed reaction is L-threonyl-[protein] + ATP = O-phospho-L-threonyl-[protein] + ADP + H(+). This Xenopus laevis (African clawed frog) protein is Serine/threonine-protein kinase pdik1l-B (pdik1-b).